We begin with the raw amino-acid sequence, 196 residues long: Peptide deformylase (196 aa).

Positions 103 and 145 each coordinate Fe cation. Residue glutamate 146 is part of the active site. Residue histidine 149 participates in Fe cation binding.

This sequence belongs to the polypeptide deformylase family. It depends on Fe(2+) as a cofactor.

It carries out the reaction N-terminal N-formyl-L-methionyl-[peptide] + H2O = N-terminal L-methionyl-[peptide] + formate. Removes the formyl group from the N-terminal Met of newly synthesized proteins. Requires at least a dipeptide for an efficient rate of reaction. N-terminal L-methionine is a prerequisite for activity but the enzyme has broad specificity at other positions. The polypeptide is Peptide deformylase (Rhodococcus opacus (strain B4)).